The following is a 472-amino-acid chain: NADH-quinone oxidoreductase subunit N (472 aa).

Transmembrane regions (helical) follow at residues L5–L25, A36–I56, I77–P97, F103–L123, L126–G146, L158–L178, L197–F217, P229–V249, W264–I284, M292–M309, I319–A339, A363–V383, G396–L416, and L441–A461.

It belongs to the complex I subunit 2 family. In terms of assembly, NDH-1 is composed of 14 different subunits. Subunits NuoA, H, J, K, L, M, N constitute the membrane sector of the complex.

It localises to the cell membrane. The enzyme catalyses a quinone + NADH + 5 H(+)(in) = a quinol + NAD(+) + 4 H(+)(out). Its function is as follows. NDH-1 shuttles electrons from NADH, via FMN and iron-sulfur (Fe-S) centers, to quinones in the respiratory chain. The immediate electron acceptor for the enzyme in this species is believed to be a menaquinone. Couples the redox reaction to proton translocation (for every two electrons transferred, four hydrogen ions are translocated across the cytoplasmic membrane), and thus conserves the redox energy in a proton gradient. This is NADH-quinone oxidoreductase subunit N from Heliobacterium modesticaldum (strain ATCC 51547 / Ice1).